A 239-amino-acid chain; its full sequence is Probable transcriptional regulatory protein Tcr_1104 (239 aa).

It belongs to the TACO1 family.

Its subcellular location is the cytoplasm. The sequence is that of Probable transcriptional regulatory protein Tcr_1104 from Hydrogenovibrio crunogenus (strain DSM 25203 / XCL-2) (Thiomicrospira crunogena).